Here is a 330-residue protein sequence, read N- to C-terminus: Malate dehydrogenase (330 aa).

15–21 (GAGGQIG) lines the NAD(+) pocket. Substrate-binding residues include Arg-95 and Arg-101. NAD(+) contacts are provided by residues Asn-108, Gln-115, and 132-134 (VGN). Asn-134 and Arg-165 together coordinate substrate. His-190 functions as the Proton acceptor in the catalytic mechanism.

Belongs to the LDH/MDH superfamily. MDH type 2 family.

The catalysed reaction is (S)-malate + NAD(+) = oxaloacetate + NADH + H(+). In terms of biological role, catalyzes the reversible oxidation of malate to oxaloacetate. This is Malate dehydrogenase from Corynebacterium jeikeium (strain K411).